Here is a 198-residue protein sequence, read N- to C-terminus: Recombination protein RecR (198 aa).

Residues 57–72 (CSICGRLTDDDPCSIC) form a C4-type zinc finger. Residues 80–175 (TTILVLEDSR…KVTRLARGLA (96 aa)) enclose the Toprim domain.

The protein belongs to the RecR family.

Functionally, may play a role in DNA repair. It seems to be involved in an RecBC-independent recombinational process of DNA repair. It may act with RecF and RecO. The protein is Recombination protein RecR of Streptococcus pneumoniae (strain 70585).